The sequence spans 233 residues: Movement and silencing protein TGBp1 (233 aa).

The (+)RNA virus helicase ATP-binding domain occupies 1-133 (MNHFINLLVA…CKLLSSLGIK (133 aa)). In terms of domain architecture, (+)RNA virus helicase C-terminal spans 134–233 (VESHRRDRDV…EFPHTTSRPQ (100 aa)).

The protein belongs to the Tymovirales TGBp1 protein family. Homodimer and homooligomer. Interacts with capsid protein. Interacts with host AGO1; this interaction targets the host protein for degradation, thereby suppressing the antiviral RNA silencing.

It localises to the host cytoplasm. Transports viral genome to neighboring plant cells directly through plasmosdesmata, without any budding. The movement protein allows efficient cell to cell propagation, by bypassing the host cell wall barrier. Increases plasmodesma size exclusion limit. Acts as a suppressor of RNA-mediated gene silencing, also known as post-transcriptional gene silencing (PTGS), a mechanism of plant viral defense that limits the accumulation of viral RNAs. This Carica papaya (Papaya) protein is Movement and silencing protein TGBp1.